The primary structure comprises 493 residues: Beta-hexosaminidase Amuc_2018 (493 aa).

Residues Met-1–Ala-21 form the signal peptide. Arg-122 is a substrate binding site. Catalysis depends on charge relay system residues Asp-151 and His-214. Zn(2+)-binding residues include Cys-227 and Cys-247. Asp-278 is a substrate binding site. The active-site Charge relay system is Glu-279. 2 residues coordinate Zn(2+): Cys-288 and Cys-291. Residues Trp-345, Tyr-373–Asp-375, and Trp-421–Glu-423 each bind substrate.

The protein belongs to the glycosyl hydrolase 20 family.

It catalyses the reaction Hydrolysis of terminal non-reducing N-acetyl-D-hexosamine residues in N-acetyl-beta-D-hexosaminides.. Its activity is regulated as follows. Significantly inhibited by the addition of sodium dodecyl sulfate (SDS), but not by EDTA, urea, 2-mercaptoethanol or Triton X-100. Strongly inhibited by Cu2(+) ions, in case of which the activity is decreased by 70%. No significant inhibition with Al(3+), Fe(3+), Ca(2+), Cd(2+), Mg(2+), Mn(2+), Ni(2+) and Zn(2+) ions. Strongly inhibited by PugNAc (O-(2-acetamido-2-deoxy-D-glucopyranosylideneamino) N-phenylcarbamate) in the sub-micromolar concentration range. PugNAc at a concentration of 0.5 mM decreases the activity by 50% and the addition of 1 mM PugNAc fully inhibits the enzyme. No significant reduction in the activity by alkylation using N-ethylmaleimide or 2-iodoacetamide. Its function is as follows. Hydrolyzes terminal GlcNAc residues from terminally unbranched N-glycans and from chitobiose. Hydrolyzes beta-1,6-linked N-acetylglucosamine and beta-1,4-linked N-acetylgalactosamine from pNP-alpha-GalNAc[beta1,3Gal]beta1,6GlcNAc and pNP-beta-GlcNAc-beta1,4-GalNAc substrates, respectively, as well as beta-1,2-linked N-acetylglucosamine units from the non-reducing end of N-glycans. Hydrolyzes GlcNAc residues linked to alpha1,3- or alpha1,6-mannose branch, but has low activity on substrates with more than one GlcNAc residue on one of the mannose branches. Releases terminal GlcNAc moieties from the N-glycopeptide Gly-Glu-Asn-(GlcNAc2Man3GlcNAc2)-Arg with high efficiency. Has moderate hydrolytic activity on the chitobiose moiety of N-glycopeptide substrate Gly-Glu-Asn-(GlcNAc2)-Arg. Does not hydrolyze GlcNAc residues from N-glycan structures bearing a bisecting GlcNAc moiety (beta1,4-linked GlcNAc to the beta1,4-linked core mannose). Potentially capable of cleaving the specific glycoside linkages in the process of mucin degradation in human intestinal tract. Hydrolyzes synthetic substrate pNP-beta-GlcNAc with high activity and pNP-beta-GalNAc to a lesser extent. Does not hydrolyze pNP-beta-glucose, pNP-beta-galactose, pNP-alpha-glucose, pNP-alpha-galactose, pNP-alpha-GlcNAc or pNP-alpha-fucose. The sequence is that of Beta-hexosaminidase Amuc_2018 from Akkermansia muciniphila (strain ATCC BAA-835 / DSM 22959 / JCM 33894 / BCRC 81048 / CCUG 64013 / CIP 107961 / Muc).